The following is a 270-amino-acid chain: Putative phosphoenolpyruvate synthase regulatory protein (270 aa).

An ADP-binding site is contributed by glycine 149–threonine 156.

The protein belongs to the pyruvate, phosphate/water dikinase regulatory protein family. PSRP subfamily.

It carries out the reaction [pyruvate, water dikinase] + ADP = [pyruvate, water dikinase]-phosphate + AMP + H(+). The enzyme catalyses [pyruvate, water dikinase]-phosphate + phosphate + H(+) = [pyruvate, water dikinase] + diphosphate. In terms of biological role, bifunctional serine/threonine kinase and phosphorylase involved in the regulation of the phosphoenolpyruvate synthase (PEPS) by catalyzing its phosphorylation/dephosphorylation. This chain is Putative phosphoenolpyruvate synthase regulatory protein, found in Alteromonas mediterranea (strain DSM 17117 / CIP 110805 / LMG 28347 / Deep ecotype).